A 310-amino-acid chain; its full sequence is p-hydroxybenzoic acid efflux pump subunit AaeA (310 aa).

The helical transmembrane segment at 12 to 32 threads the bilayer; sequence AITVVLVILAFIAIFNAWVYY.

It belongs to the membrane fusion protein (MFP) (TC 8.A.1) family.

Its subcellular location is the cell inner membrane. In terms of biological role, forms an efflux pump with AaeB. The chain is p-hydroxybenzoic acid efflux pump subunit AaeA from Escherichia coli O9:H4 (strain HS).